Here is a 234-residue protein sequence, read N- to C-terminus: RNA-binding protein pno1 (234 aa).

Positions M1–G39 are disordered. In terms of domain architecture, KH spans L158–L207.

It belongs to the PNO1 family.

The protein localises to the nucleus. Its subcellular location is the nucleolus. The sequence is that of RNA-binding protein pno1 from Ixodes scapularis (Black-legged tick).